We begin with the raw amino-acid sequence, 710 residues long: Ribonuclease R (710 aa).

An RNB domain is found at R246–E573. Positions G625 to V705 constitute an S1 motif domain.

It belongs to the RNR ribonuclease family. RNase R subfamily.

Its subcellular location is the cytoplasm. The enzyme catalyses Exonucleolytic cleavage in the 3'- to 5'-direction to yield nucleoside 5'-phosphates.. In terms of biological role, 3'-5' exoribonuclease that releases 5'-nucleoside monophosphates and is involved in maturation of structured RNAs. This Thermotoga maritima (strain ATCC 43589 / DSM 3109 / JCM 10099 / NBRC 100826 / MSB8) protein is Ribonuclease R.